Reading from the N-terminus, the 431-residue chain is Adenosylhomocysteinase (431 aa).

3 residues coordinate substrate: Thr-56, Asp-131, and Glu-156. Residue 157–159 (TTT) coordinates NAD(+). 2 residues coordinate substrate: Lys-186 and Asp-190. NAD(+) is bound by residues Asn-191, 222 to 227 (GDVGKG), Glu-243, 299 to 301 (IGH), and Asn-345.

The protein belongs to the adenosylhomocysteinase family. Homotetramer. The cofactor is NAD(+).

The enzyme catalyses S-adenosyl-L-homocysteine + H2O = L-homocysteine + adenosine. It functions in the pathway amino-acid biosynthesis; L-homocysteine biosynthesis; L-homocysteine from S-adenosyl-L-homocysteine: step 1/1. Functionally, adenosylhomocysteine is a competitive inhibitor of S-adenosyl-L-methionine-dependent methyl transferase reactions; therefore adenosylhomocysteinase may play a key role in the control of methylations via regulation of the intracellular concentration of adenosylhomocysteine. This Dictyostelium discoideum (Social amoeba) protein is Adenosylhomocysteinase (sahA).